A 424-amino-acid polypeptide reads, in one-letter code: F-box protein At2g38590 (424 aa).

The region spanning 2–47 (TTMISNLPRVLIEEIFFRVPLKSLRAVRLTCKSWNTLSKSRSFRKL) is the F-box domain.

The sequence is that of F-box protein At2g38590 from Arabidopsis thaliana (Mouse-ear cress).